A 610-amino-acid polypeptide reads, in one-letter code: UvrABC system protein C (610 aa).

One can recognise a GIY-YIG domain in the interval 16–94; it reads SQPGVYRMYD…IKLYQPRYNV (79 aa). A UVR domain is found at 204–239; the sequence is DQVLTQLIARMEKASQDLAFEEAARIRDQIQAVRRV.

It belongs to the UvrC family. Interacts with UvrB in an incision complex.

The protein localises to the cytoplasm. Its function is as follows. The UvrABC repair system catalyzes the recognition and processing of DNA lesions. UvrC both incises the 5' and 3' sides of the lesion. The N-terminal half is responsible for the 3' incision and the C-terminal half is responsible for the 5' incision. This is UvrABC system protein C from Salmonella paratyphi A (strain ATCC 9150 / SARB42).